The following is a 491-amino-acid chain: MANYFNTLNLRQQLAQLGKCRFMAREEFADEAGYLKGKKVVIVGCGAQGLNQGLNMRDSGLDVAYALRKEAIDEKRPSWRKATENGFKVGTYEDLIPQADLVVNLTPDKQHTSVVRAVQPLMKDGAALGYSHGFNIVEVGEQVRKDITVVMVAPKCPGTEVREEYKRGFGVPTLIAVHPENDPKGEGMAIAKAWAAATGGHRAGVLESSFVAEVKSDLMGEQTILCGMLQAGSLLCFDKLVAEGTDPAYAEKLIQFGWETITEALKQGGITLMMDRLSNPAKLRAYALSEQLKGIMAPLFQKHMDDIISGAFSGGMMADWAEDDVKLLNWREETGKSAFENAPQFEGKISEQEYFDHGVLMVAMVKAGVELAFETMVDAGIIEESAYYESLHELPLIANTIARKRLYEMNVVISDTAEYGNYLFANAAVPLLKEFMTTLQAGDLGKSVAGTSVDNAQLRDVNEAVRNHPIESVGRKLRGYMTDMKRIAVAG.

In terms of domain architecture, KARI N-terminal Rossmann spans 15–208 (AQLGKCRFMA…GGHRAGVLES (194 aa)). NADP(+) contacts are provided by residues 45–48 (CGAQ), R68, R76, S78, and 108–110 (DKQ). H132 is an active-site residue. NADP(+) is bound at residue G158. KARI C-terminal knotted domains lie at 209 to 344 (SFVA…NAPQ) and 345 to 484 (FEGK…MTDM). Mg(2+)-binding residues include D217, E221, E389, and E393. Residue S414 participates in substrate binding.

It belongs to the ketol-acid reductoisomerase family. It depends on Mg(2+) as a cofactor.

The enzyme catalyses (2R)-2,3-dihydroxy-3-methylbutanoate + NADP(+) = (2S)-2-acetolactate + NADPH + H(+). It catalyses the reaction (2R,3R)-2,3-dihydroxy-3-methylpentanoate + NADP(+) = (S)-2-ethyl-2-hydroxy-3-oxobutanoate + NADPH + H(+). Its pathway is amino-acid biosynthesis; L-isoleucine biosynthesis; L-isoleucine from 2-oxobutanoate: step 2/4. It functions in the pathway amino-acid biosynthesis; L-valine biosynthesis; L-valine from pyruvate: step 2/4. Functionally, involved in the biosynthesis of branched-chain amino acids (BCAA). Catalyzes an alkyl-migration followed by a ketol-acid reduction of (S)-2-acetolactate (S2AL) to yield (R)-2,3-dihydroxy-isovalerate. In the isomerase reaction, S2AL is rearranged via a Mg-dependent methyl migration to produce 3-hydroxy-3-methyl-2-ketobutyrate (HMKB). In the reductase reaction, this 2-ketoacid undergoes a metal-dependent reduction by NADPH to yield (R)-2,3-dihydroxy-isovalerate. The sequence is that of Ketol-acid reductoisomerase (NADP(+)) from Serratia proteamaculans (strain 568).